We begin with the raw amino-acid sequence, 320 residues long: Cytochrome f (320 aa).

The signal sequence occupies residues Met1–Ala35. Heme contacts are provided by Tyr36, Cys56, Cys59, and His60. The chain crosses the membrane as a helical span at residues Val286–Lys306.

This sequence belongs to the cytochrome f family. In terms of assembly, the 4 large subunits of the cytochrome b6-f complex are cytochrome b6, subunit IV (17 kDa polypeptide, petD), cytochrome f and the Rieske protein, while the 4 small subunits are PetG, PetL, PetM and PetN. The complex functions as a dimer. It depends on heme as a cofactor.

The protein resides in the plastid. The protein localises to the chloroplast thylakoid membrane. Functionally, component of the cytochrome b6-f complex, which mediates electron transfer between photosystem II (PSII) and photosystem I (PSI), cyclic electron flow around PSI, and state transitions. This Olimarabidopsis pumila (Dwarf rocket) protein is Cytochrome f.